We begin with the raw amino-acid sequence, 392 residues long: Sulfate adenylyltransferase (392 aa).

It belongs to the sulfate adenylyltransferase family.

It carries out the reaction sulfate + ATP + H(+) = adenosine 5'-phosphosulfate + diphosphate. The protein operates within sulfur metabolism; hydrogen sulfide biosynthesis; sulfite from sulfate: step 1/3. In Nostoc punctiforme (strain ATCC 29133 / PCC 73102), this protein is Sulfate adenylyltransferase.